The chain runs to 342 residues: Tetraacyldisaccharide 4'-kinase (342 aa).

Position 68 to 75 (68 to 75 (TVGGTGKT)) interacts with ATP.

It belongs to the LpxK family.

It catalyses the reaction a lipid A disaccharide + ATP = a lipid IVA + ADP + H(+). It functions in the pathway glycolipid biosynthesis; lipid IV(A) biosynthesis; lipid IV(A) from (3R)-3-hydroxytetradecanoyl-[acyl-carrier-protein] and UDP-N-acetyl-alpha-D-glucosamine: step 6/6. Its function is as follows. Transfers the gamma-phosphate of ATP to the 4'-position of a tetraacyldisaccharide 1-phosphate intermediate (termed DS-1-P) to form tetraacyldisaccharide 1,4'-bis-phosphate (lipid IVA). This Burkholderia ambifaria (strain MC40-6) protein is Tetraacyldisaccharide 4'-kinase.